The sequence spans 42 residues: Crotamine-IV-3 (42 aa).

Cystine bridges form between Cys4-Cys37, Cys11-Cys31, and Cys19-Cys38.

It belongs to the crotamine-myotoxin family. In terms of assembly, monomer. As to expression, expressed by the venom gland.

It localises to the secreted. Cationic peptide that possesses multiple functions. It acts as a cell-penetrating peptide (CPP), and as a potent voltage-gated potassium channel (Kv) inhibitor. It exhibits antimicrobial activities, and hind limb paralysis. It also induces potent blockade of neuromuscular transmission in young chicken biventer cervicis preparation and potent myotoxic effect. In mice, it induces myonecrosis, upon intramuscular or subcutaneous injections. This Crotalus durissus cumanensis (South American rattlesnake) protein is Crotamine-IV-3.